The sequence spans 93 residues: Acylphosphatase (93 aa).

Residues Cys5 and Cys49 are joined by a disulfide bond. The Acylphosphatase-like domain occupies Cys5–Tyr93. Catalysis depends on residues Arg20 and Asn38.

The protein belongs to the acylphosphatase family.

The catalysed reaction is an acyl phosphate + H2O = a carboxylate + phosphate + H(+). This Salmonella typhi protein is Acylphosphatase.